We begin with the raw amino-acid sequence, 202 residues long: dITP/XTP pyrophosphatase (202 aa).

10-15 (TSNRHK) is a binding site for substrate. Asp70 acts as the Proton acceptor in catalysis. Mg(2+) is bound at residue Asp70. Residues Ser71, 153–156 (FGYD), Lys176, and 181–182 (HR) contribute to the substrate site.

It belongs to the HAM1 NTPase family. As to quaternary structure, homodimer. It depends on Mg(2+) as a cofactor.

The catalysed reaction is XTP + H2O = XMP + diphosphate + H(+). It catalyses the reaction dITP + H2O = dIMP + diphosphate + H(+). It carries out the reaction ITP + H2O = IMP + diphosphate + H(+). Its function is as follows. Pyrophosphatase that catalyzes the hydrolysis of nucleoside triphosphates to their monophosphate derivatives, with a high preference for the non-canonical purine nucleotides XTP (xanthosine triphosphate), dITP (deoxyinosine triphosphate) and ITP. Seems to function as a house-cleaning enzyme that removes non-canonical purine nucleotides from the nucleotide pool, thus preventing their incorporation into DNA/RNA and avoiding chromosomal lesions. The polypeptide is dITP/XTP pyrophosphatase (Methylacidiphilum infernorum (isolate V4) (Methylokorus infernorum (strain V4))).